We begin with the raw amino-acid sequence, 262 residues long: Small ribosomal subunit protein uS2 (262 aa).

The interval 228–262 (VSNEEVAAEQNINLDDKEESEQAETTEENTSVESN) is disordered. Positions 243 to 254 (DKEESEQAETTE) are enriched in acidic residues.

It belongs to the universal ribosomal protein uS2 family.

This Staphylococcus epidermidis (strain ATCC 35984 / DSM 28319 / BCRC 17069 / CCUG 31568 / BM 3577 / RP62A) protein is Small ribosomal subunit protein uS2.